Reading from the N-terminus, the 73-residue chain is Long neurotoxin 1 (73 aa).

5 cysteine pairs are disulfide-bonded: Cys3–Cys21, Cys14–Cys42, Cys27–Cys31, Cys46–Cys57, and Cys58–Cys63.

It belongs to the three-finger toxin family. Long-chain subfamily. Type II alpha-neurotoxin sub-subfamily. As to expression, expressed by the venom gland.

The protein localises to the secreted. Binds with high affinity to muscular (alpha-1/CHRNA1) and neuronal (alpha-7/CHRNA7) nicotinic acetylcholine receptor (nAChR) and inhibits acetylcholine from binding to the receptor, thereby impairing neuromuscular and neuronal transmission. The polypeptide is Long neurotoxin 1 (Ophiophagus hannah (King cobra)).